The following is a 308-amino-acid chain: Elongation factor Ts (308 aa).

An involved in Mg(2+) ion dislocation from EF-Tu region spans residues 80–83 (TDFV).

Belongs to the EF-Ts family.

The protein localises to the cytoplasm. In terms of biological role, associates with the EF-Tu.GDP complex and induces the exchange of GDP to GTP. It remains bound to the aminoacyl-tRNA.EF-Tu.GTP complex up to the GTP hydrolysis stage on the ribosome. The polypeptide is Elongation factor Ts (Rhizobium etli (strain ATCC 51251 / DSM 11541 / JCM 21823 / NBRC 15573 / CFN 42)).